Here is a 491-residue protein sequence, read N- to C-terminus: Cytosolic Fe-S cluster assembly factor NAR1 (491 aa).

Residues C20, C59, C62, C65, C177, C231, C412, and C416 each coordinate [4Fe-4S] cluster.

It belongs to the NARF family. In terms of assembly, interacts with CIA1.

Its function is as follows. Component of the cytosolic Fe/S protein assembly machinery. Required for maturation of extramitochondrial Fe/S proteins. May play a role in the transfer of pre-assembled Fe/S clusters to target apoproteins. This Saccharomyces cerevisiae (strain YJM789) (Baker's yeast) protein is Cytosolic Fe-S cluster assembly factor NAR1 (NAR1).